A 514-amino-acid chain; its full sequence is Major facilitator superfamily domain-containing protein 4A (514 aa).

5 helical membrane-spanning segments follow: residues 19–39 (LTYWSVFFSFGLCIAFLGPTL), 53–73 (ISWVFFSQQLCLLLGSALGGV), 82–102 (LWALFTSSLAISLVFAVIPFC), 107–127 (VLASVMALAGLAMGCIDTVAN), and 139–159 (AVFLQVLHFFVGFGALLSPLI). The N-linked (GlcNAc...) asparagine glycan is linked to N177. 7 helical membrane-spanning segments follow: residues 221–241 (YAFWIMALINLPVPMAVLMLL), 307–327 (FFAIHITGALVLFMTDGLTGA), 347–367 (VAGYLPSLFWGFITLGRLLSI), 376–396 (ATMVFINVVGVVVTFLVLLIF), 400–420 (VVFLFVGTASLGLFLSSTFPS), 438–458 (VLVTGAGVGEMVLQMLVGSIF), and 466–486 (FLVCGVIFGCLAFTFYILLLF).

It belongs to the major facilitator superfamily.

The protein localises to the membrane. The polypeptide is Major facilitator superfamily domain-containing protein 4A (Homo sapiens (Human)).